We begin with the raw amino-acid sequence, 65 residues long: Stress-associated endoplasmic reticulum protein 2 (65 aa).

A helical membrane pass occupies residues 38–58; sequence GPWLLALFVFVVCGSAIFQII.

It belongs to the RAMP4 family. Interacts with SEC61B, SEC61A1 and the SEC61 complex. Interacts with CANX.

The protein localises to the membrane. It is found in the endoplasmic reticulum membrane. Its function is as follows. Interacts with target proteins during their translocation into the lumen of the endoplasmic reticulum. Protects unfolded target proteins against degradation during ER stress. May facilitate glycosylation of target proteins after termination of ER stress. May modulate the use of N-glycosylation sites on target proteins. This is Stress-associated endoplasmic reticulum protein 2 (SERP2) from Bos taurus (Bovine).